The following is a 472-amino-acid chain: Tubulin gamma chain (472 aa).

142 to 148 (AGGTGSG) serves as a coordination point for GTP.

This sequence belongs to the tubulin family.

It localises to the cytoplasm. Its subcellular location is the cytoskeleton. It is found in the microtubule organizing center. Tubulin is the major constituent of microtubules. The gamma chain is found at microtubule organizing centers (MTOC) such as the spindle poles, suggesting that it is involved in the minus-end nucleation of microtubule assembly. This chain is Tubulin gamma chain (TUBG), found in Anemia phyllitidis (Fern).